We begin with the raw amino-acid sequence, 1488 residues long: Chromosome partition protein MukB (1488 aa).

34 to 41 (GGNGAGKS) is an ATP binding site. Coiled-coil stretches lie at residues 326-413 (LEAD…QTRA), 444-472 (LDTF…QTAH), and 509-602 (RHLA…RRAP). The tract at residues 666-783 (PGGAEDQRLN…SLPIFGRAAR (118 aa)) is flexible hinge. Coiled-coil stretches lie at residues 835–923 (EAEI…AKLE), 977–1116 (EMLS…AKAG), and 1209–1265 (VEAI…LQSV).

It belongs to the SMC family. MukB subfamily. Homodimerization via its hinge domain. Binds to DNA via its C-terminal region. Interacts, and probably forms a ternary complex, with MukE and MukF via its C-terminal region. The complex formation is stimulated by calcium or magnesium. Interacts with tubulin-related protein FtsZ.

The protein resides in the cytoplasm. It is found in the nucleoid. Its function is as follows. Plays a central role in chromosome condensation, segregation and cell cycle progression. Functions as a homodimer, which is essential for chromosome partition. Involved in negative DNA supercoiling in vivo, and by this means organize and compact chromosomes. May achieve or facilitate chromosome segregation by condensation DNA from both sides of a centrally located replisome during cell division. The protein is Chromosome partition protein MukB of Salmonella paratyphi C (strain RKS4594).